The following is a 153-amino-acid chain: Adenosine 5'-monophosphoramidase HINT3 (153 aa).

The region spanning Ile20–Arg130 is the HIT domain. Residues Asp46–Ile47 and His115–His117 each bind AMP. Residues His113–His117 carry the Histidine triad motif motif. Residue His115 is the Tele-AMP-histidine intermediate of the active site.

The protein belongs to the HINT family. As to quaternary structure, forms dimers to octamers and even larger oligomer.

The protein localises to the cytoplasm. It is found in the nucleus. The catalysed reaction is adenosine 5'-phosphoramidate + H2O = AMP + NH4(+). Functionally, exhibits adenosine 5'-monophosphoramidase activity, hydrolyzing purine nucleotide phosphoramidates with a single phosphate group such as adenosine 5'monophosphoramidate (AMP-NH2) to yield AMP and NH2. Hydrolyzes lysyl-AMP (AMP-N-epsilon-(N-alpha-acetyl lysine methyl ester)) generated by lysine tRNA ligase. This Xenopus tropicalis (Western clawed frog) protein is Adenosine 5'-monophosphoramidase HINT3 (hint3).